A 212-amino-acid chain; its full sequence is Stromal cell-derived factor 2-like protein (212 aa).

The N-terminal stretch at 1–19 (MKSLFLILILCITIPLIFA) is a signal peptide. Asn-20 carries N-linked (GlcNAc...) asparagine glycosylation. 3 consecutive MIR domains span residues 29 to 86 (ITKV…IKGP), 94 to 149 (GTVV…VETE), and 151 to 206 (GKEW…TEEG).

The protein localises to the secreted. This Dictyostelium discoideum (Social amoeba) protein is Stromal cell-derived factor 2-like protein.